We begin with the raw amino-acid sequence, 275 residues long: 2-dehydro-3-deoxyphosphooctonate aldolase (275 aa).

The protein belongs to the KdsA family.

It is found in the cytoplasm. It catalyses the reaction D-arabinose 5-phosphate + phosphoenolpyruvate + H2O = 3-deoxy-alpha-D-manno-2-octulosonate-8-phosphate + phosphate. The protein operates within carbohydrate biosynthesis; 3-deoxy-D-manno-octulosonate biosynthesis; 3-deoxy-D-manno-octulosonate from D-ribulose 5-phosphate: step 2/3. It participates in bacterial outer membrane biogenesis; lipopolysaccharide biosynthesis. This chain is 2-dehydro-3-deoxyphosphooctonate aldolase, found in Francisella philomiragia subsp. philomiragia (strain ATCC 25017 / CCUG 19701 / FSC 153 / O#319-036).